We begin with the raw amino-acid sequence, 362 residues long: Alpha-glucoside transport ATP-binding protein AglK (362 aa).

Residues 4-235 form the ABC transporter domain; that stretch reads LLLKDIRKSY…PANLFVARFI (232 aa). 36-43 lines the ATP pocket; sequence GPSGCGKS.

It belongs to the ABC transporter superfamily.

Its subcellular location is the cell inner membrane. In terms of biological role, part of the binding-protein-dependent transport system for alpha-glucosides such as sucrose, maltose and trehalose. Probably responsible for energy coupling to the transport system. The chain is Alpha-glucoside transport ATP-binding protein AglK (aglK) from Rhizobium meliloti (strain 1021) (Ensifer meliloti).